The following is a 401-amino-acid chain: Glycerol-3-phosphate dehydrogenase [NAD(+)] 1 (401 aa).

Residues 40–45, Phe-128, Lys-151, and Ala-184 contribute to the NAD(+) site; that span reads GSGNWG. Lys-151 is a binding site for substrate. Lys-244 (proton acceptor) is an active-site residue. NAD(+) is bound by residues Arg-309 and Gln-338. Residue 309-310 coordinates substrate; that stretch reads RN.

This sequence belongs to the NAD-dependent glycerol-3-phosphate dehydrogenase family.

It localises to the cytoplasm. It catalyses the reaction sn-glycerol 3-phosphate + NAD(+) = dihydroxyacetone phosphate + NADH + H(+). The polypeptide is Glycerol-3-phosphate dehydrogenase [NAD(+)] 1 (GPD1) (Zygosaccharomyces rouxii).